A 515-amino-acid polypeptide reads, in one-letter code: Maturase K (515 aa).

It belongs to the intron maturase 2 family. MatK subfamily.

The protein localises to the plastid. It localises to the chloroplast. In terms of biological role, usually encoded in the trnK tRNA gene intron. Probably assists in splicing its own and other chloroplast group II introns. The chain is Maturase K from Alpinia zerumbet (Shell ginger).